We begin with the raw amino-acid sequence, 133 residues long: ATP synthase epsilon chain (133 aa).

The protein belongs to the ATPase epsilon chain family. As to quaternary structure, F-type ATPases have 2 components, CF(1) - the catalytic core - and CF(0) - the membrane proton channel. CF(1) has five subunits: alpha(3), beta(3), gamma(1), delta(1), epsilon(1). CF(0) has three main subunits: a, b and c.

It localises to the cell membrane. In terms of biological role, produces ATP from ADP in the presence of a proton gradient across the membrane. The polypeptide is ATP synthase epsilon chain (Bacillus cereus (strain ATCC 14579 / DSM 31 / CCUG 7414 / JCM 2152 / NBRC 15305 / NCIMB 9373 / NCTC 2599 / NRRL B-3711)).